We begin with the raw amino-acid sequence, 266 residues long: L-aspartate dehydrogenase (266 aa).

2 residues coordinate NAD(+): A123 and N189. H219 is an active-site residue.

This sequence belongs to the L-aspartate dehydrogenase family.

The enzyme catalyses L-aspartate + NADP(+) + H2O = oxaloacetate + NH4(+) + NADPH + H(+). It catalyses the reaction L-aspartate + NAD(+) + H2O = oxaloacetate + NH4(+) + NADH + H(+). It participates in cofactor biosynthesis; NAD(+) biosynthesis; iminoaspartate from L-aspartate (dehydrogenase route): step 1/1. In terms of biological role, specifically catalyzes the NAD or NADP-dependent dehydrogenation of L-aspartate to iminoaspartate. The polypeptide is L-aspartate dehydrogenase (Cupriavidus taiwanensis (strain DSM 17343 / BCRC 17206 / CCUG 44338 / CIP 107171 / LMG 19424 / R1) (Ralstonia taiwanensis (strain LMG 19424))).